Reading from the N-terminus, the 188-residue chain is Archaemetzincin (188 aa).

Zn(2+) is bound at residue His-137. Catalysis depends on Glu-138, which acts as the Proton acceptor. Positions 141, 147, 148, 153, 172, and 175 each coordinate Zn(2+).

It belongs to the peptidase M54 family. In terms of assembly, monomer. Zn(2+) serves as cofactor.

Probable zinc metalloprotease whose natural substrate is unknown. This chain is Archaemetzincin, found in Pyrococcus abyssi (strain GE5 / Orsay).